A 350-amino-acid chain; its full sequence is Biotin synthase (350 aa).

A Radical SAM core domain is found at 41–268; it reads NEVQVSRLLS…KSRVRLSAGR (228 aa). [4Fe-4S] cluster contacts are provided by Cys56, Cys60, and Cys63. Residues Cys100, Cys131, Cys191, and Arg263 each coordinate [2Fe-2S] cluster.

It belongs to the radical SAM superfamily. Biotin synthase family. Homodimer. [4Fe-4S] cluster serves as cofactor. [2Fe-2S] cluster is required as a cofactor.

It catalyses the reaction (4R,5S)-dethiobiotin + (sulfur carrier)-SH + 2 reduced [2Fe-2S]-[ferredoxin] + 2 S-adenosyl-L-methionine = (sulfur carrier)-H + biotin + 2 5'-deoxyadenosine + 2 L-methionine + 2 oxidized [2Fe-2S]-[ferredoxin]. It functions in the pathway cofactor biosynthesis; biotin biosynthesis; biotin from 7,8-diaminononanoate: step 2/2. Catalyzes the conversion of dethiobiotin (DTB) to biotin by the insertion of a sulfur atom into dethiobiotin via a radical-based mechanism. The polypeptide is Biotin synthase (Shewanella pealeana (strain ATCC 700345 / ANG-SQ1)).